A 512-amino-acid polypeptide reads, in one-letter code: Protein maph-9 (512 aa).

3 disordered regions span residues 24–103, 168–386, and 481–512; these read ISRK…DDDF, DLSE…KNEK, and GNRLRARSQSAKSIAKRSRSRPGTTTSLRPFR. Low complexity-rich tracts occupy residues 30–39 and 78–95; these read TTTTSSGSSG and STLSFLTSSSSATSSTAA. A compositionally biased stretch (basic and acidic residues) spans 178–200; that stretch reads TDHEDPSLTFRVDKELEQSESKK. Residues 230-239 are compositionally biased toward polar residues; the sequence is PQTSANLSTK. Composition is skewed to basic and acidic residues over residues 260 to 302 and 310 to 386; these read KPSD…RENS and VQDH…KNEK. The stretch at 267 to 429 forms a coiled coil; that stretch reads KEWLQKKERE…QLEESEKMTR (163 aa). Positions 502–512 are enriched in polar residues; it reads PGTTTSLRPFR.

As to expression, expressed in amphid and phasmid ciliated neurons.

The protein resides in the cell projection. Its subcellular location is the cilium. It localises to the cytoplasm. It is found in the cytoskeleton. The protein localises to the cilium axoneme. This chain is Protein maph-9, found in Caenorhabditis elegans.